Consider the following 1605-residue polypeptide: Kinesin-like protein klp-12 (1605 aa).

The Kinesin motor domain occupies 5-358 (CVQVALRIRP…MKYANRAKEI (354 aa)). 84–91 (GQTGSGKT) contributes to the ATP binding site. Positions 91 and 217 each coordinate Mg(2+). 3 disordered regions span residues 548 to 596 (GENV…EESE), 1085 to 1152 (VSDA…SNNN), and 1198 to 1232 (SRSN…SSSK). The span at 550 to 559 (NVSSEYSSMA) shows a compositional bias: polar residues. Acidic residues predominate over residues 560–596 (QDEDGTSNEAEELLDEEDLDEDEDETAEEKQEQEESE). Residues 575-730 (EEDLDEDEDE…KKAKVELIKK (156 aa)) are a coiled coil. Over residues 1116 to 1152 (VSTSPASTSFANSTSQSPSFSRNTRFRSTVGGVSNNN) the composition is skewed to polar residues. A compositionally biased stretch (low complexity) spans 1200–1232 (SNLMSSSSSTTTTTLSSSNLLNPRGTTSSSSSK). WD repeat units follow at residues 1282 to 1319 (GHAR…EIRT), 1389 to 1427 (FLET…PLGR), 1525 to 1566 (AHQQ…RMKL), and 1573 to 1605 (AHQE…SNAV).

It belongs to the TRAFAC class myosin-kinesin ATPase superfamily. Kinesin family. In terms of assembly, component of a complex at least composed of alpha tubulin and beta tubulin. Within the complex, interacts with the alpha tubulin and beta tubulin dimer.

The protein resides in the cytoplasm. It is found in the cytoskeleton. Its function is as follows. Microtubule-binding motor protein which has ATPase activity. In complex with alpha and beta tubulins, preferentially binds to the growing microtubule plus-end to stabilize it and detaches following ATP hydrolysis. Negatively regulates axonal length through inhibiting microtubule polymerization at its plus-end. The protein is Kinesin-like protein klp-12 of Caenorhabditis elegans.